Reading from the N-terminus, the 473-residue chain is Inactive pancreatic lipase-related protein 1 (473 aa).

Residues Met-1–Gly-17 form the signal peptide. 2 disulfide bridges follow: Cys-21–Cys-27 and Cys-109–Cys-120. Ser-171 acts as the Nucleophile in catalysis. The Charge relay system role is filled by Asp-194. Residues Glu-205, Arg-208, Asp-210, and Asp-213 each contribute to the Ca(2+) site. The cysteines at positions 255 and 279 are disulfide-linked. His-281 functions as the Charge relay system in the catalytic mechanism. Intrachain disulfides connect Cys-303–Cys-314, Cys-317–Cys-322, and Cys-451–Cys-467. The PLAT domain occupies Trp-356–Cys-467.

This sequence belongs to the AB hydrolase superfamily. Lipase family. As to expression, expressed in female, but not in male, lacrimal gland. Expressed in male and female sublingual gland and pancreas.

The protein resides in the secreted. Functionally, may function as inhibitor of dietary triglyceride digestion. Lacks detectable lipase activity (in vitro). The chain is Inactive pancreatic lipase-related protein 1 (Pnliprp1) from Mus musculus (Mouse).